A 794-amino-acid polypeptide reads, in one-letter code: Zinc finger protein 148 (794 aa).

Lys-6 participates in a covalent cross-link: Glycyl lysine isopeptide (Lys-Gly) (interchain with G-Cter in SUMO2). Ser-51 bears the Phosphoserine mark. Residues Lys-88, Lys-115, and Lys-132 each participate in a glycyl lysine isopeptide (Lys-Gly) (interchain with G-Cter in SUMO2) cross-link. A C2H2-type 1 zinc finger spans residues 171–193 (HVCEHCNAAFRTNYHLQRHVFIH). Phosphothreonine is present on Thr-194. C2H2-type zinc fingers lie at residues 199-221 (FQCS…EKIH) and 227-249 (FRCD…KRTH). Ser-250 carries the post-translational modification Phosphoserine. The C2H2-type 4 zinc finger occupies 255-278 (YQCEYCLQYFSRTDRVLKHKRMCH). Residue Lys-291 forms a Glycyl lysine isopeptide (Lys-Gly) (interchain with G-Cter in SUMO2) linkage. A disordered region spans residues 298 to 336 (EEDSGFSTSPKDNSLPKKKRQKTEKKSSGMDKESALDKS). 2 positions are modified to phosphoserine: Ser-301 and Ser-306. Lys-308 participates in a covalent cross-link: Glycyl lysine isopeptide (Lys-Gly) (interchain with G-Cter in SUMO2). The segment covering 321–336 (EKKSSGMDKESALDKS) has biased composition (basic and acidic residues). A Glycyl lysine isopeptide (Lys-Gly) (interchain with G-Cter in SUMO1); alternate cross-link involves residue Lys-356. Lys-356 participates in a covalent cross-link: Glycyl lysine isopeptide (Lys-Gly) (interchain with G-Cter in SUMO2); alternate. Lys-402 is covalently cross-linked (Glycyl lysine isopeptide (Lys-Gly) (interchain with G-Cter in SUMO2)). Residue Ser-412 is modified to Phosphoserine. Residues Lys-421 and Lys-424 each participate in a glycyl lysine isopeptide (Lys-Gly) (interchain with G-Cter in SUMO2) cross-link. A compositionally biased stretch (polar residues) spans 574–588 (NSSEVPEVTPSENVG). The interval 574–596 (NSSEVPEVTPSENVGSSSQASSS) is disordered. At Lys-607 the chain carries N6-acetyllysine. Phosphoserine occurs at positions 665 and 784.

This sequence belongs to the krueppel C2H2-type zinc-finger protein family. Interacts with HNRNPDL. Interacts with the 5FMC complex; the interaction requires association with CHTOP. Interacts with CAVIN1. Sumoylated with SUMO2. Desumoylated by SENP3, resulting in the stimulation of transcription of its target genes.

The protein resides in the nucleus. Involved in transcriptional regulation. Represses the transcription of a number of genes including gastrin, stromelysin and enolase. Binds to the G-rich box in the enhancer region of these genes. In Homo sapiens (Human), this protein is Zinc finger protein 148 (ZNF148).